The following is a 586-amino-acid chain: Proton channel OTOP1 (586 aa).

Residues 1–52 (MVEHGGTDSMWLNKYNPAAASSASSSSSSDAENKLFSRLKVSLTKKYPQKNA) lie on the Cytoplasmic side of the membrane. Residues 53–74 (ELLSAQYGTNLLLLGVSVMLAL) form a helical membrane-spanning segment. Residues 75–82 (AAQSGPVK) lie on the Extracellular side of the membrane. Residues 83-106 (EEHLLSFITVLMLVQLVWMLCYMI) traverse the membrane as a helical segment. The Cytoplasmic portion of the chain corresponds to 107–124 (RRERERSPVPERDAHAGA). The chain crosses the membrane as a helical span at residues 125 to 147 (SWIRGGLTMLALLSLIMDAFRIG). Topologically, residues 148–157 (YFVGYHSCIS) are extracellular. Residues 158-182 (AALGVYPIVHALHTISQVHFLWFHI) form a helical membrane-spanning segment. Over 183 to 190 (KDVIKKYE) the chain is Cytoplasmic. Residues 191–217 (TFERFGVIHAVFTNLLLWCNGVMSETE) traverse the membrane as a helical segment. At 218–255 (HFMHNHRRRLIEMGYANLSTVDVQPHCNCTTSVCSMFS) the chain is on the extracellular side. The chain crosses the membrane as a helical span at residues 256–281 (TSLYYLYPFNIEYHIFVSAMLFVMWK). Residues 282–303 (NIGRTLDRHSNRKRRSTGSTGL) lie on the Cytoplasmic side of the membrane. Residues 304-326 (LLGPLGGLVALASSVSVLVVYLI) traverse the membrane as a helical segment. The Extracellular segment spans residues 327 to 336 (HLEKTEEMHE). The helical transmembrane segment at 337-362 (AAVSMFYYYGVAMMACMCVGSGTGLL) threads the bilayer. The Cytoplasmic segment spans residues 363-380 (VYRMENRPMDTGSNPART). Residues 381–405 (LDTELLLASSLGSWLMSWCSVVASV) form a helical membrane-spanning segment. The Extracellular portion of the chain corresponds to 406 to 417 (AEAGQKSPSFSW). The helical transmembrane segment at 418 to 438 (TSLTYSLLLVLEKCIQNLFIV) threads the bilayer. Topologically, residues 439 to 518 (ESLYRRHSEE…TPGRKRQILK (80 aa)) are cytoplasmic. The tract at residues 484–505 (PAAGSHALSRKQPDAPLPAGQR) is disordered. Residues 519-537 (NICMFLFMCNISLWILPAF) traverse the membrane as a helical segment. Residues 538–555 (GCRPQYDNPLENETFGTS) are Extracellular-facing. The chain crosses the membrane as a helical span at residues 556–579 (VWTTVLNVAIPLNLFYRMHSVASL). Over 580–586 (FEVFRKV) the chain is Cytoplasmic.

It belongs to the otopetrin family. In terms of assembly, homodimer.

It localises to the cell membrane. Its subcellular location is the cell projection. The protein localises to the microvillus. The catalysed reaction is H(+)(in) = H(+)(out). Its activity is regulated as follows. Activated by both acid and alkali, with proton influx in response to extracellular acid and proton efflux during alkali stimulation. Inhibited by Zn(2+); this inhibition is thought to be pH-sensitive. Currents evoked in response to mild acid (pH 6.0) stimulus may also be mildly potentiated by exposure to Zn(2+). Activated by NH(4)Cl. Its function is as follows. Proton-selective ion channel. Biphasically modulated by acid and alkali, mediating proton influx and efflux in response to extracellular acid and base stimulation, respectively. May be involved in acid and base perception. Sensor for ammonium chloride (NH(4)Cl) in taste receptor cells. NH(4)Cl acts by increasing the intracellular pH, thereby generating a driving force for proton entry through OTOP1 channel. Plays a role in the regulation of Ca(2+) flux in response to purigenic (ATP, ADP and UDP) stimuli, leading to increase in cytosolic Ca(2+) due to influx of extracellular calcium. May play this role by inhibiting P2Y purinoceptor-mediated Ca(2+) release in a Ca(2+)-dependent manner and promote an influx of Ca(2+) in response to ATP. Through this mechanism and possibly others, plays a role in the formation and function of calcium carbonate-based structures in the vestibular system of the inner ear, called otoconia, that sense gravity and linear acceleration. This chain is Proton channel OTOP1, found in Danio rerio (Zebrafish).